A 20-amino-acid polypeptide reads, in one-letter code: 7.2 kDa cytotoxin RVV-7 (20 aa).

Monomer. Homodimerizes during storage at 30 degrees Celsius (observed after 3 days). As to expression, expressed by the venom gland.

It localises to the secreted. Its subcellular location is the target cell membrane. In terms of biological role, this three-finger cytotoxin shows cytotoxicity and direct nephrotoxicity. The cytotoxicity has been observed on B16F10 melanoma cells (EC(50)=2.56 uM) and on kidney proximal tubular epithelium LLCPK1 cells (EC(50)=4.79 uM); it is due to necrotic cell death and not to apoptosis. Direct nephrotoxicity has been deduced from binding to LLCPK1 cell line and to kidney membranes. In addition, after intravenous injection into mice tail vein, the toxin principally accumulates in kidney, but only minimally in blood, liver and brain. The chain is 7.2 kDa cytotoxin RVV-7 from Daboia russelii (Russel's viper).